Here is a 191-residue protein sequence, read N- to C-terminus: Protein YceI (191 aa).

The signal sequence occupies residues methionine 1 to alanine 22.

It belongs to the UPF0312 family. Type 1 subfamily.

The protein resides in the periplasm. In Shigella boydii serotype 4 (strain Sb227), this protein is Protein YceI.